The following is a 300-amino-acid chain: Putative glycosyltransferase ORF300 (300 aa).

It belongs to the glycosyltransferase group 1 family. Glycosyltransferase 4 subfamily.

The chain is Putative glycosyltransferase ORF300 from Acidianus hospitalis (AFV-1).